A 161-amino-acid polypeptide reads, in one-letter code: Nucleotide-binding protein SAR11_0692 (161 aa).

This sequence belongs to the YajQ family.

Functionally, nucleotide-binding protein. In Pelagibacter ubique (strain HTCC1062), this protein is Nucleotide-binding protein SAR11_0692.